A 239-amino-acid polypeptide reads, in one-letter code: 2,3,4,5-tetrahydropyridine-2,6-dicarboxylate N-acetyltransferase (239 aa).

It belongs to the transferase hexapeptide repeat family. DapH subfamily.

It carries out the reaction (S)-2,3,4,5-tetrahydrodipicolinate + acetyl-CoA + H2O = L-2-acetamido-6-oxoheptanedioate + CoA. Its pathway is amino-acid biosynthesis; L-lysine biosynthesis via DAP pathway; LL-2,6-diaminopimelate from (S)-tetrahydrodipicolinate (acetylase route): step 1/3. Functionally, catalyzes the transfer of an acetyl group from acetyl-CoA to tetrahydrodipicolinate. In Staphylococcus haemolyticus (strain JCSC1435), this protein is 2,3,4,5-tetrahydropyridine-2,6-dicarboxylate N-acetyltransferase.